The sequence spans 693 residues: Polyribonucleotide nucleotidyltransferase (693 aa).

Mg(2+) contacts are provided by Asp-487 and Asp-493. Residues 554–613 (PRIYTIKINPEKIKDVIGKGGSIIRMLTEETGTVIEIKDDGIVKISAINGEKAKYAIKRI) enclose the KH domain. In terms of domain architecture, S1 motif spans 623–691 (GKIYSGKVTR…RQGRIRLSMK (69 aa)).

Belongs to the polyribonucleotide nucleotidyltransferase family. As to quaternary structure, component of the RNA degradosome, which is a multiprotein complex involved in RNA processing and mRNA degradation. Mg(2+) is required as a cofactor.

The protein resides in the cytoplasm. It carries out the reaction RNA(n+1) + phosphate = RNA(n) + a ribonucleoside 5'-diphosphate. Functionally, involved in mRNA degradation. Catalyzes the phosphorolysis of single-stranded polyribonucleotides processively in the 3'- to 5'-direction. This is Polyribonucleotide nucleotidyltransferase from Buchnera aphidicola subsp. Cinara cedri (strain Cc).